We begin with the raw amino-acid sequence, 387 residues long: 3-hydroxy-D-aspartate aldolase (387 aa).

K62 carries the post-translational modification N6-(pyridoxal phosphate)lysine. Q85 contributes to the pyridoxal 5'-phosphate binding site. The interval 199-228 (HGQLRGPQGQAGRRHCPGERGRGRAGGRGL) is disordered. Pyridoxal 5'-phosphate contacts are provided by residues T238, 256-257 (GS), and Y265. Mg(2+)-binding residues include H355 and D357.

This sequence belongs to the DSD1 family. As to quaternary structure, homodimer. The cofactor is pyridoxal 5'-phosphate. Mn(2+) serves as cofactor. Requires Mg(2+) as cofactor. Co(2+) is required as a cofactor.

It catalyses the reaction (3S)-3-hydroxy-D-aspartate = glyoxylate + glycine. It carries out the reaction (3R)-3-hydroxy-D-aspartate = glyoxylate + glycine. Functionally, catalyzes the condensation of glyoxylate and glycine into (2R,3S)-beta-hydroxyaspartate ((3S)-3-hydroxy-D-aspartate). Functions in glyoxylate assimilation via the beta-hydroxyaspartate cycle (BHAC). In vitro catalyzes the cleavage of both D-erythro- and D-threo-3-hydroxyaspartate to glycine and glyoxylate. Also acts on D-threonine, D-3-phenylserine and D-3-3,4-methylenedioxyphenylserine. The polypeptide is 3-hydroxy-D-aspartate aldolase (dhaa) (Paracoccus denitrificans).